An 819-amino-acid chain; its full sequence is Mitosis inhibitor protein kinase SWE1 (819 aa).

Serine 36 is modified (phosphoserine; by CDC5). A Phosphothreonine; by CDC28 modification is found at threonine 45. Residues serine 56 and serine 63 each carry the phosphoserine; by CDC28 modification. A Phosphoserine modification is found at serine 70. Threonine 74 is modified (phosphothreonine; by CDC28). The segment at 86–105 (KIEEEEEEEEEGKDEESVDS) is disordered. The span at 88–102 (EEEEEEEEEGKDEES) shows a compositional bias: acidic residues. Serine 102 is subject to Phosphoserine; by CDC5. Serine 105 bears the Phosphoserine; by CDC28 mark. Serine 111 bears the Phosphoserine; by CDC5, CDC28 and CLA4 mark. The tract at residues 117–168 (ESVTTPITKRSAEKTNSPISLKQWNQRWFPKNDARTENTSSSSSYSVAKPNQ) is disordered. Position 118 is a phosphoserine; by CDC5 (serine 118). Residues 118 to 142 (SVTTPITKRSAEKTNSPISLKQWNQ) are compositionally biased toward polar residues. Phosphothreonine; by CDC28 is present on residues threonine 121 and threonine 124. At serine 127 the chain carries Phosphoserine; by CDC28. At threonine 131 the chain carries Phosphothreonine; by CDC5. Position 133 is a phosphoserine; by CDC28 (serine 133). Residue serine 136 is modified to Phosphoserine; by CDC28 and CLA4. Residues serine 156 and serine 169 each carry the phosphoserine; by CDC5 modification. Threonine 196 carries the phosphothreonine; by CDC28 modification. Position 201 is a phosphoserine; by CDC28 (serine 201). 2 positions are modified to phosphoserine; by CDC5: serine 225 and serine 254. Serine 262 carries the post-translational modification Phosphoserine. A phosphoserine; by CDC28 mark is found at serine 263 and serine 266. Residues 278–297 (NQTNILSPTNSLVTNSSPQT) are disordered. Threonine 280 carries the phosphothreonine; by CDC5 modification. Residues serine 284 and serine 294 each carry the phosphoserine modification. Phosphoserine; by CLA4 is present on serine 312. The segment at 341–395 (PIIISSHHSTRKNPQPYQFRGRYDNDTDEEISTPTRRKSIIGATSQTHRESRPLS) is disordered. Position 345 is a phosphoserine (serine 345). Phosphothreonine; by CDC28 is present on residues threonine 367 and threonine 373. A Phosphoserine; by CDC5 and CLA4 modification is found at serine 379. Threonine 384 bears the Phosphothreonine; by CDC28 mark. Residues serine 395 and serine 438 each carry the phosphoserine; by CDC5 and CLA4 modification. The 351-residue stretch at 444-794 (FTNVHSIGKG…NQILQTEECL (351 aa)) folds into the Protein kinase domain. ATP is bound by residues 450 to 458 (IGKGQFSTV) and lysine 473. Aspartate 579 serves as the catalytic Proton acceptor. Mg(2+)-binding residues include asparagine 584 and aspartate 597. Serine 610 bears the Phosphoserine; by CDC5 mark. Residue threonine 629 is modified to Phosphothreonine; by CDC5. A Phosphothreonine; by CDC5 and CLA4 modification is found at threonine 688. The residue at position 692 (threonine 692) is a Phosphothreonine. Positions 707-716 (SNNAGTSTVH) are enriched in polar residues. Positions 707-736 (SNNAGTSTVHNNSNINNPNMNNGNDNNNVN) are disordered. Over residues 717-736 (NNSNINNPNMNNGNDNNNVN) the composition is skewed to low complexity. Lysine 741 participates in a covalent cross-link: Glycyl lysine isopeptide (Lys-Gly) (interchain with G-Cter in ubiquitin).

It belongs to the protein kinase superfamily. Ser/Thr protein kinase family. WEE1 subfamily. In terms of assembly, interacts with CLB2-CDC28. Partial hyperphosphorylation of SWE1 by CLB2-CDC28 stabilizes the ternary complex of SWE1 and CLB2-CDC28 and stimulates kinase activity of SWE1 in a positive feedback loop, maintaining CLB2-CDC28 in the tyrosine-phosphorylated state. Fully hyperphosphorylated SWE1 dissociates from CLB2-CDC28. Interacts with HSL7, KCC4 and MET30. Ubiquitinated by the SCF(MET30) complex, leading to its degradation by the proteasome. In terms of processing, phosphorylated progressively by CLA4, CLB2-CDC28 and CDC5. CLA4-dependent phosphorylation occurs in late S phase, followed by phosphorylation by CLB2-CDC28 in early G2, when the levels of mitotic CLB2 increases. This phosphorylation is critical for triggering subsequent SWE1-CDC5 interaction and CDC5-dependent phosphorylation. The resulting cumulative hyperphosphorylation down-regulates SWE1 by targeting it for ubiquitin-mediated degradation. This stepwise phosphorylation is thought to be a mechanism to integrate the different checkpoint requirements before entry into mitosis.

It localises to the bud neck. Its subcellular location is the nucleus. The enzyme catalyses L-seryl-[protein] + ATP = O-phospho-L-seryl-[protein] + ADP + H(+). The catalysed reaction is L-threonyl-[protein] + ATP = O-phospho-L-threonyl-[protein] + ADP + H(+). Its function is as follows. Protein kinase that acts as a negative regulator of entry into mitosis (G2 to M transition) by phosphorylating and inhibiting the mitosis-promoting cyclin B-bound CDC28 at 'Tyr-19'. SWE1-mediated inhibition of CDC28 acts in a cell size or morphogenesis checkpoint to delay mitosis in response to defects in growth, actin organization or bud formation. Inhibits the activity of B-type cyclins in replication initiation strongly for CLB2, moderately for CLB3 and CLB4, and there is no apparent inhibition for CLB5 and CLB6, correlating with the normal expression timing of those cyclins. Hyperphosphorylation and degradation of SWE1 when all checkpoint requirement are met releases CLB2-CDC28 from inhibition and allows for progression through the cell cycle. SWE1-dependent CDC28 phosphorylation is also required for pachytene arrest upon activation of the recombination checkpoint during meiosis. Also involved in the regulation of nitrogen starvation- and short chain alcohol-induced filamentous growth, or filamentous differentiation in response to slowed DNA synthesis. Can act both on serines and on tyrosines. This chain is Mitosis inhibitor protein kinase SWE1 (SWE1), found in Saccharomyces cerevisiae (strain ATCC 204508 / S288c) (Baker's yeast).